The sequence spans 420 residues: Glutamyl-tRNA reductase (420 aa).

Residues 49–52, S109, 114–116, and Q120 contribute to the substrate site; these read TCNR and EPQ. C50 functions as the Nucleophile in the catalytic mechanism. 189 to 194 lines the NADP(+) pocket; sequence GAGETI.

The protein belongs to the glutamyl-tRNA reductase family. As to quaternary structure, homodimer.

The enzyme catalyses (S)-4-amino-5-oxopentanoate + tRNA(Glu) + NADP(+) = L-glutamyl-tRNA(Glu) + NADPH + H(+). It functions in the pathway porphyrin-containing compound metabolism; protoporphyrin-IX biosynthesis; 5-aminolevulinate from L-glutamyl-tRNA(Glu): step 1/2. Its function is as follows. Catalyzes the NADPH-dependent reduction of glutamyl-tRNA(Glu) to glutamate 1-semialdehyde (GSA). This chain is Glutamyl-tRNA reductase, found in Yersinia pseudotuberculosis serotype O:1b (strain IP 31758).